The following is a 99-amino-acid chain: Aspartyl/glutamyl-tRNA(Asn/Gln) amidotransferase subunit C (99 aa).

It belongs to the GatC family. Heterotrimer of A, B and C subunits.

The enzyme catalyses L-glutamyl-tRNA(Gln) + L-glutamine + ATP + H2O = L-glutaminyl-tRNA(Gln) + L-glutamate + ADP + phosphate + H(+). It catalyses the reaction L-aspartyl-tRNA(Asn) + L-glutamine + ATP + H2O = L-asparaginyl-tRNA(Asn) + L-glutamate + ADP + phosphate + 2 H(+). Its function is as follows. Allows the formation of correctly charged Asn-tRNA(Asn) or Gln-tRNA(Gln) through the transamidation of misacylated Asp-tRNA(Asn) or Glu-tRNA(Gln) in organisms which lack either or both of asparaginyl-tRNA or glutaminyl-tRNA synthetases. The reaction takes place in the presence of glutamine and ATP through an activated phospho-Asp-tRNA(Asn) or phospho-Glu-tRNA(Gln). This Burkholderia lata (strain ATCC 17760 / DSM 23089 / LMG 22485 / NCIMB 9086 / R18194 / 383) protein is Aspartyl/glutamyl-tRNA(Asn/Gln) amidotransferase subunit C.